Reading from the N-terminus, the 157-residue chain is Protein Smg homolog (157 aa).

It belongs to the Smg family.

The sequence is that of Protein Smg homolog from Shewanella piezotolerans (strain WP3 / JCM 13877).